The chain runs to 413 residues: Serine hydroxymethyltransferase (413 aa).

(6S)-5,6,7,8-tetrahydrofolate contacts are provided by residues leucine 117 and 121–123 (GHL). Lysine 226 is modified (N6-(pyridoxal phosphate)lysine). 349–351 (SPF) contacts (6S)-5,6,7,8-tetrahydrofolate.

Belongs to the SHMT family. Homodimer. Pyridoxal 5'-phosphate serves as cofactor.

It is found in the cytoplasm. It carries out the reaction (6R)-5,10-methylene-5,6,7,8-tetrahydrofolate + glycine + H2O = (6S)-5,6,7,8-tetrahydrofolate + L-serine. It functions in the pathway one-carbon metabolism; tetrahydrofolate interconversion. Its pathway is amino-acid biosynthesis; glycine biosynthesis; glycine from L-serine: step 1/1. In terms of biological role, catalyzes the reversible interconversion of serine and glycine with tetrahydrofolate (THF) serving as the one-carbon carrier. This reaction serves as the major source of one-carbon groups required for the biosynthesis of purines, thymidylate, methionine, and other important biomolecules. Also exhibits THF-independent aldolase activity toward beta-hydroxyamino acids, producing glycine and aldehydes, via a retro-aldol mechanism. The polypeptide is Serine hydroxymethyltransferase (Listeria monocytogenes serotype 4b (strain F2365)).